A 344-amino-acid chain; its full sequence is Anthranilate phosphoribosyltransferase (344 aa).

5-phospho-alpha-D-ribose 1-diphosphate contacts are provided by residues Gly-80, Gly-83 to Asp-84, Thr-88, Asn-90 to Thr-93, Lys-108 to Ser-116, and Ser-120. Residue Gly-80 participates in anthranilate binding. Ser-92 serves as a coordination point for Mg(2+). Asn-111 contacts anthranilate. Residue Arg-166 coordinates anthranilate. Mg(2+)-binding residues include Asp-225 and Glu-226.

The protein belongs to the anthranilate phosphoribosyltransferase family. Homodimer. The cofactor is Mg(2+).

The enzyme catalyses N-(5-phospho-beta-D-ribosyl)anthranilate + diphosphate = 5-phospho-alpha-D-ribose 1-diphosphate + anthranilate. The protein operates within amino-acid biosynthesis; L-tryptophan biosynthesis; L-tryptophan from chorismate: step 2/5. Catalyzes the transfer of the phosphoribosyl group of 5-phosphorylribose-1-pyrophosphate (PRPP) to anthranilate to yield N-(5'-phosphoribosyl)-anthranilate (PRA). The sequence is that of Anthranilate phosphoribosyltransferase from Petrotoga mobilis (strain DSM 10674 / SJ95).